Reading from the N-terminus, the 449-residue chain is Probable pectate lyase P59 (449 aa).

A signal peptide spans 1–22; sequence MGGPKIKYSFLFLCITFATIIP. Residues N56, N80, and N81 are each glycosylated (N-linked (GlcNAc...) asparagine). D245, D269, and D273 together coordinate Ca(2+). R325 is an active-site residue.

The protein belongs to the polysaccharide lyase 1 family. Requires Ca(2+) as cofactor. Expressed in anthers and pollen.

The enzyme catalyses Eliminative cleavage of (1-&gt;4)-alpha-D-galacturonan to give oligosaccharides with 4-deoxy-alpha-D-galact-4-enuronosyl groups at their non-reducing ends.. It participates in glycan metabolism; pectin degradation; 2-dehydro-3-deoxy-D-gluconate from pectin: step 2/5. Functionally, might be needed during pollen development and tube growth. This Solanum lycopersicum (Tomato) protein is Probable pectate lyase P59 (LAT59).